Reading from the N-terminus, the 165-residue chain is Probable calcium-binding protein CML18 (165 aa).

4 EF-hand domains span residues 16–51, 52–87, 90–125, and 126–161; these read EQLAELREIFRSFDQNKDGSLTELELGSLLRSLGLK, PSQDQLDTLIQKADRNNNGLVEFSEFVALVEPDLVK, YTDDQLKAIFRMFDRDGNGYITAAELAHSMAKLGHA, and LTAEELTGMIKEADRDGDGCIDFQEFVQAITSAAFD. Ca(2+) contacts are provided by D29, N31, D33, S35, E40, D65, N67, N69, E76, D103, D105, N107, Y109, E114, D139, D141, D143, C145, and E150.

Calcium and pH-dependent interaction with NHX1 (increases when pH decreases, better at pH 5.5 than at pH 7.5). Also interacts with the CPB protein At2g18750.

Its subcellular location is the vacuole. Potential calcium sensor that modulates ion selectivity of NHX1. This Arabidopsis thaliana (Mouse-ear cress) protein is Probable calcium-binding protein CML18 (CML18).